The chain runs to 407 residues: Probable tRNA sulfurtransferase (407 aa).

In terms of domain architecture, THUMP spans 61 to 165 (NEITYRLSKI…LDAIYMYEEV (105 aa)). Residues 183–184 (ML), 208–209 (HF), R265, G287, and Q296 each bind ATP.

The protein belongs to the ThiI family.

The protein localises to the cytoplasm. The catalysed reaction is [ThiI sulfur-carrier protein]-S-sulfanyl-L-cysteine + a uridine in tRNA + 2 reduced [2Fe-2S]-[ferredoxin] + ATP + H(+) = [ThiI sulfur-carrier protein]-L-cysteine + a 4-thiouridine in tRNA + 2 oxidized [2Fe-2S]-[ferredoxin] + AMP + diphosphate. The enzyme catalyses [ThiS sulfur-carrier protein]-C-terminal Gly-Gly-AMP + S-sulfanyl-L-cysteinyl-[cysteine desulfurase] + AH2 = [ThiS sulfur-carrier protein]-C-terminal-Gly-aminoethanethioate + L-cysteinyl-[cysteine desulfurase] + A + AMP + 2 H(+). The protein operates within cofactor biosynthesis; thiamine diphosphate biosynthesis. In terms of biological role, catalyzes the ATP-dependent transfer of a sulfur to tRNA to produce 4-thiouridine in position 8 of tRNAs, which functions as a near-UV photosensor. Also catalyzes the transfer of sulfur to the sulfur carrier protein ThiS, forming ThiS-thiocarboxylate. This is a step in the synthesis of thiazole, in the thiamine biosynthesis pathway. The sulfur is donated as persulfide by IscS. The polypeptide is Probable tRNA sulfurtransferase (Staphylococcus aureus (strain MSSA476)).